The sequence spans 330 residues: UPF0353 protein MAP_3434 (330 aa).

2 consecutive transmembrane segments (helical) span residues 21-41 and 63-83; these read GMLL…VVQA and LPIA…ATPT. Residues 94–289 enclose the VWFA domain; it reads VIMLVIDMSQ…GELQKSYNAI (196 aa). The chain crosses the membrane as a helical span at residues 304-324; it reads AGWLRLGVLTALIATALALLI.

Belongs to the UPF0353 family.

It localises to the cell membrane. In Mycolicibacterium paratuberculosis (strain ATCC BAA-968 / K-10) (Mycobacterium paratuberculosis), this protein is UPF0353 protein MAP_3434.